Here is a 216-residue protein sequence, read N- to C-terminus: Uracil phosphoribosyltransferase (216 aa).

Residues Arg85, Arg110, and 135–143 (DPMVATGYS) contribute to the 5-phospho-alpha-D-ribose 1-diphosphate site. Uracil contacts are provided by residues Ile200 and 205–207 (GDA). A 5-phospho-alpha-D-ribose 1-diphosphate-binding site is contributed by Asp206.

This sequence belongs to the UPRTase family. The cofactor is Mg(2+).

The catalysed reaction is UMP + diphosphate = 5-phospho-alpha-D-ribose 1-diphosphate + uracil. Its pathway is pyrimidine metabolism; UMP biosynthesis via salvage pathway; UMP from uracil: step 1/1. Allosterically activated by GTP. Its function is as follows. Catalyzes the conversion of uracil and 5-phospho-alpha-D-ribose 1-diphosphate (PRPP) to UMP and diphosphate. The chain is Uracil phosphoribosyltransferase from Burkholderia pseudomallei (strain 668).